Reading from the N-terminus, the 251-residue chain is 2,3-bisphosphoglycerate-dependent phosphoglycerate mutase (251 aa).

Residues 13 to 20 (RHGESEWN), 26 to 27 (TG), Arg-65, 92 to 95 (ERHY), Lys-103, 119 to 120 (RR), and 186 to 187 (GN) contribute to the substrate site. His-14 (tele-phosphohistidine intermediate) is an active-site residue. Glu-92 serves as the catalytic Proton donor/acceptor.

It belongs to the phosphoglycerate mutase family. BPG-dependent PGAM subfamily.

The enzyme catalyses (2R)-2-phosphoglycerate = (2R)-3-phosphoglycerate. Its pathway is carbohydrate degradation; glycolysis; pyruvate from D-glyceraldehyde 3-phosphate: step 3/5. Functionally, catalyzes the interconversion of 2-phosphoglycerate and 3-phosphoglycerate. The protein is 2,3-bisphosphoglycerate-dependent phosphoglycerate mutase of Rhodococcus jostii (strain RHA1).